A 216-amino-acid polypeptide reads, in one-letter code: Probable ubiquitin-conjugating enzyme E2 ECU01_1010 (216 aa).

Positions 1 to 10 (MFKPSAHRRL) are enriched in basic residues. The disordered stretch occupies residues 1-29 (MFKPSAHRRLPREDDIIQEDDEDGPLWPS). One can recognise a UBC core domain in the interval 29–196 (SALRRLSNEE…VIRIAREEDE (168 aa)). C120 (glycyl thioester intermediate) is an active-site residue.

It belongs to the ubiquitin-conjugating enzyme family.

It catalyses the reaction S-ubiquitinyl-[E1 ubiquitin-activating enzyme]-L-cysteine + [E2 ubiquitin-conjugating enzyme]-L-cysteine = [E1 ubiquitin-activating enzyme]-L-cysteine + S-ubiquitinyl-[E2 ubiquitin-conjugating enzyme]-L-cysteine.. The protein operates within protein modification; protein ubiquitination. Functionally, catalyzes the covalent attachment of ubiquitin to other proteins so as to signal them for selective protein degradation. Involved in the formation of multiubiquitin chains. The sequence is that of Probable ubiquitin-conjugating enzyme E2 ECU01_1010 from Encephalitozoon cuniculi (strain GB-M1) (Microsporidian parasite).